Reading from the N-terminus, the 473-residue chain is Photosystem II CP43 reaction center protein (473 aa).

Residues 1 to 14 (MKTLYSLRRFYPVE) constitute a propeptide that is removed on maturation. Threonine 15 is modified (N-acetylthreonine). At threonine 15 the chain carries Phosphothreonine. 5 helical membrane passes run 69 to 93 (LFEV…PHLA), 134 to 155 (LLGP…KDRN), 178 to 200 (KALY…RKIT), 255 to 275 (KPFA…LSYS), and 291 to 312 (WFNN…ASQA). Glutamate 367 contributes to the [CaMn4O5] cluster binding site. Residues 447 to 471 (RARAAAAGFEKGIDRDFEPVLSMTP) form a helical membrane-spanning segment.

This sequence belongs to the PsbB/PsbC family. PsbC subfamily. In terms of assembly, PSII is composed of 1 copy each of membrane proteins PsbA, PsbB, PsbC, PsbD, PsbE, PsbF, PsbH, PsbI, PsbJ, PsbK, PsbL, PsbM, PsbT, PsbX, PsbY, PsbZ, Psb30/Ycf12, at least 3 peripheral proteins of the oxygen-evolving complex and a large number of cofactors. It forms dimeric complexes. Binds multiple chlorophylls and provides some of the ligands for the Ca-4Mn-5O cluster of the oxygen-evolving complex. It may also provide a ligand for a Cl- that is required for oxygen evolution. PSII binds additional chlorophylls, carotenoids and specific lipids. is required as a cofactor.

Its subcellular location is the plastid. The protein resides in the chloroplast thylakoid membrane. In terms of biological role, one of the components of the core complex of photosystem II (PSII). It binds chlorophyll and helps catalyze the primary light-induced photochemical processes of PSII. PSII is a light-driven water:plastoquinone oxidoreductase, using light energy to abstract electrons from H(2)O, generating O(2) and a proton gradient subsequently used for ATP formation. In Amborella trichopoda, this protein is Photosystem II CP43 reaction center protein.